We begin with the raw amino-acid sequence, 154 residues long: Large ribosomal subunit protein uL13 (154 aa).

The segment at 131-154 (DHKHEAQQPEVVDFKSMNSKNTRG) is disordered.

The protein belongs to the universal ribosomal protein uL13 family. In terms of assembly, part of the 50S ribosomal subunit.

Its function is as follows. This protein is one of the early assembly proteins of the 50S ribosomal subunit, although it is not seen to bind rRNA by itself. It is important during the early stages of 50S assembly. In Maricaulis maris (strain MCS10) (Caulobacter maris), this protein is Large ribosomal subunit protein uL13.